A 361-amino-acid polypeptide reads, in one-letter code: tRNA/tmRNA (uracil-C(5))-methyltransferase (361 aa).

S-adenosyl-L-methionine is bound by residues glutamine 185, tyrosine 213, asparagine 218, glutamate 234, and aspartate 294. Cysteine 319 serves as the catalytic Nucleophile. The Proton acceptor role is filled by glutamate 353.

This sequence belongs to the class I-like SAM-binding methyltransferase superfamily. RNA M5U methyltransferase family. TrmA subfamily.

It catalyses the reaction uridine(54) in tRNA + S-adenosyl-L-methionine = 5-methyluridine(54) in tRNA + S-adenosyl-L-homocysteine + H(+). It carries out the reaction uridine(341) in tmRNA + S-adenosyl-L-methionine = 5-methyluridine(341) in tmRNA + S-adenosyl-L-homocysteine + H(+). Dual-specificity methyltransferase that catalyzes the formation of 5-methyluridine at position 54 (m5U54) in all tRNAs, and that of position 341 (m5U341) in tmRNA (transfer-mRNA). The sequence is that of tRNA/tmRNA (uracil-C(5))-methyltransferase from Pseudomonas putida (strain ATCC 700007 / DSM 6899 / JCM 31910 / BCRC 17059 / LMG 24140 / F1).